Reading from the N-terminus, the 442-residue chain is MLDILLLRKDLASAVARLETRKKPQAFLNVEAFQALESERKTIQMRTEELQSQRNQLSKQIGMLMGKGEKDAAEAAKAQVAAIKAELDGSATRLDQIQGELQTMLAAVPNLPHESVPVGSDESANVEVRRWSPDGQQPRSLGFTPKDHVDLGEPLGLDFDMGVKLSGSRFTVMKGGIARLHRALAQFMLDVQTQEHGYTECYVPYVVNADSLKGTGQLPKFEGDLFAAQKGGQDAEPVPDNAQLYLIPTSEVPLTNFVRDEVLAEAQLPLKLTAHTPCFRSEAGSYGRDTRGMIRQHQFDKVEMVQIVHPDKSYEALEEMTRHAEAVLQKLGLPYRVMSLCTGDMGFGAAKTYDLEVWLPAQNTYREISSVSNCEAFQARRLQARFKNAQGKNELVHTLNGSGLAVGRTLVAVLENYQNEDGSVTIPEVLRPYMGGQATLSV.

249 to 251 (TSE) is a binding site for L-serine. 280–282 (RSE) contributes to the ATP binding site. E303 is a binding site for L-serine. ATP is bound at residue 367–370 (EISS). S402 serves as a coordination point for L-serine.

Belongs to the class-II aminoacyl-tRNA synthetase family. Type-1 seryl-tRNA synthetase subfamily. As to quaternary structure, homodimer. The tRNA molecule binds across the dimer.

It is found in the cytoplasm. The enzyme catalyses tRNA(Ser) + L-serine + ATP = L-seryl-tRNA(Ser) + AMP + diphosphate + H(+). It carries out the reaction tRNA(Sec) + L-serine + ATP = L-seryl-tRNA(Sec) + AMP + diphosphate + H(+). It participates in aminoacyl-tRNA biosynthesis; selenocysteinyl-tRNA(Sec) biosynthesis; L-seryl-tRNA(Sec) from L-serine and tRNA(Sec): step 1/1. In terms of biological role, catalyzes the attachment of serine to tRNA(Ser). Is also able to aminoacylate tRNA(Sec) with serine, to form the misacylated tRNA L-seryl-tRNA(Sec), which will be further converted into selenocysteinyl-tRNA(Sec). The chain is Serine--tRNA ligase from Acidovorax sp. (strain JS42).